Consider the following 323-residue polypeptide: MGMEGLLQNSTNFVLTGLITHPAFPGLLFAVVFSIFVVAITANLVMILLIHMDSRLHTPMYFLLSQLSIMDTIYICITVPKMLQDLLSKDKTISFLGCAVQIFYLTLIGGEFFLLGLMAYDRYVAVCNPLRYPLLMNRRVCLFMVVGSWVGGSLDGFMLTPVTMSFPFCRSREINHFFCEIPAVLKLSCTDTSLYETLMYACCVLMLLIPLSVISVSYTHILLTVHRMNSAEGRRKAFATCSSHIMVVSVFYGAAFYTNVLPHSYHTPEKDKVVSAFYTILTPMLNPLIYSLRNKDVAAALRKVLGRCGSSQSIRVATVIRKG.

The Extracellular segment spans residues 1–26 (MGMEGLLQNSTNFVLTGLITHPAFPG). A glycan (N-linked (GlcNAc...) asparagine) is linked at asparagine 9. The chain crosses the membrane as a helical span at residues 27-50 (LLFAVVFSIFVVAITANLVMILLI). Residues 51 to 58 (HMDSRLHT) lie on the Cytoplasmic side of the membrane. Residues 59 to 80 (PMYFLLSQLSIMDTIYICITVP) form a helical membrane-spanning segment. Residues 81–101 (KMLQDLLSKDKTISFLGCAVQ) are Extracellular-facing. A disulfide bridge links cysteine 98 with cysteine 189. The helical transmembrane segment at 102–120 (IFYLTLIGGEFFLLGLMAY) threads the bilayer. The Cytoplasmic segment spans residues 121–139 (DRYVAVCNPLRYPLLMNRR). A helical transmembrane segment spans residues 140-158 (VCLFMVVGSWVGGSLDGFM). The Extracellular portion of the chain corresponds to 159–195 (LTPVTMSFPFCRSREINHFFCEIPAVLKLSCTDTSLY). Residues 196–219 (ETLMYACCVLMLLIPLSVISVSYT) traverse the membrane as a helical segment. The Cytoplasmic portion of the chain corresponds to 220–236 (HILLTVHRMNSAEGRRK). A helical transmembrane segment spans residues 237–259 (AFATCSSHIMVVSVFYGAAFYTN). Residues 260 to 272 (VLPHSYHTPEKDK) lie on the Extracellular side of the membrane. The helical transmembrane segment at 273–292 (VVSAFYTILTPMLNPLIYSL) threads the bilayer. Topologically, residues 293 to 323 (RNKDVAAALRKVLGRCGSSQSIRVATVIRKG) are cytoplasmic.

Belongs to the G-protein coupled receptor 1 family.

It localises to the cell membrane. Odorant receptor. This chain is Olfactory receptor 2T35 (OR2T35), found in Homo sapiens (Human).